Consider the following 1131-residue polypeptide: Probable pre-mRNA-splicing factor ATP-dependent RNA helicase mog-1 (1131 aa).

Composition is skewed to basic and acidic residues over residues 1–12 (MSDKRADGRLEG), 65–122 (RGVT…DRSG), 139–148 (WDQDDREGSS), 160–173 (RGER…DSER), 180–225 (RSER…WEEE), and 407–416 (GNYKESHQFA). Disordered stretches follow at residues 1–225 (MSDK…WEEE) and 389–416 (MGVK…HQFA). Residues 451 to 614 (MNVIRENNVV…FGGNCPTFTI (164 aa)) form the Helicase ATP-binding domain. 464–471 (GETGSGKT) is a binding site for ATP. The DEAH box signature appears at 561–564 (DEAH). In terms of domain architecture, Helicase C-terminal spans 629-812 (PVEDYVDAAV…NVVLLLKSLG (184 aa)). 2 stretches are compositionally biased toward basic and acidic residues: residues 1085 to 1114 (EMRE…RRVV) and 1121 to 1131 (ARSERRKLWGL). The disordered stretch occupies residues 1085–1131 (EMREAQKEMERRKEESDKAFKRPESSRRVVEVGSKSARSERRKLWGL).

This sequence belongs to the DEAD box helicase family. DEAH subfamily. PRP16 sub-subfamily.

It localises to the nucleus. It carries out the reaction ATP + H2O = ADP + phosphate + H(+). Probable ATP-binding RNA helicase involved in pre-mRNA splicing. In Caenorhabditis elegans, this protein is Probable pre-mRNA-splicing factor ATP-dependent RNA helicase mog-1 (mog-1).